The primary structure comprises 245 residues: tRNA (guanine-N(1)-)-methyltransferase (245 aa).

S-adenosyl-L-methionine contacts are provided by residues G113 and I133–L138.

This sequence belongs to the RNA methyltransferase TrmD family. As to quaternary structure, homodimer.

Its subcellular location is the cytoplasm. The enzyme catalyses guanosine(37) in tRNA + S-adenosyl-L-methionine = N(1)-methylguanosine(37) in tRNA + S-adenosyl-L-homocysteine + H(+). Functionally, specifically methylates guanosine-37 in various tRNAs. This Actinobacillus succinogenes (strain ATCC 55618 / DSM 22257 / CCUG 43843 / 130Z) protein is tRNA (guanine-N(1)-)-methyltransferase.